The following is a 432-amino-acid chain: Major royal jelly protein 1 (432 aa).

An N-terminal signal peptide occupies residues 1-19; it reads MTRLFMLVCLGIVCQGTTG. Residues N28, N144, and N177 are each glycosylated (N-linked (GlcNAc...) asparagine). Cystine bridges form between C118–C150, C132–C195, and C329–C416. Residue P364 participates in 24-methylenecholesterol binding. H431 carries the post-translational modification Histidine amide; atypical. L432 is modified (leucine amide; atypical).

The protein belongs to the major royal jelly protein family. In terms of assembly, is present in royal jelly in different forms: monomer (55 kDa), oligomeric subunit (ca. 287-420 kDa), and water-insoluble aggregates in sediment after interaction with fatty acids. Component of the apisin heterooligomer complex consisting of 4 copies of MRJP1 and 4 copies of apisimin, associated with 8 molecules of 24-methylenecholesterol; apisimin forms a bridge connecting two MRJP1 dimers. At low pH multiple apisin octamers stack to form filaments that increase the viscosity of royal jelly; these filaments may be stabilized by bound fatty acid chains. The mandibular gland, where royal jelly is produced, has low pH conditions favouring filament formation, while the higher pH of the insect midgut favors filament disassembly. Post-translationally, N-glycosylated on Asn-28, Asn-144 and Asn-177. Glycosylation is required to prevent apisin multimers from aggregating. In terms of processing, jellein-2 is probably processed to yield jellein-1 and jellein-4. In terms of tissue distribution, found in and secreted from the hypopharyngeal glands of the worker honey bee (at protein level); expression peaks at 12 days post eclosion. Expressed in the brains of worker bees (at protein level); found in antennal lobe, optical lobe and a subpopulation of Kenyon cells in the mushroom body. Found in the ommatidia of worker bees (at protein level). Expressed in the spermatheca of adult queen bees (at protein level); expression levels are higher in mated queens than in virgin queens. Expressed in queen bee ovaries and male drone testes.

The protein localises to the secreted. Its subcellular location is the cytoplasm. The protein resides in the cell projection. It is found in the rhabdomere. It localises to the cytoskeleton. Most abundant protein component of royal jelly, a substance produced in the hypopharyngeal gland containing proteins, free amino acids, fatty acids, sugars and other nutrients, which is fed to developing larvae by worker nurse bees. Major royal jelly proteins (Mrjps) are high in essential amino acids and probably have a nutritional function in larval food. All larvae are fed some royal jelly (also known as worker jelly) early in their development but it forms the principal source of nutrition for larvae destined to become queen bees. Induces the differentiation of honey bee larvae into queens through an Egfr-mediated signaling pathway. Promotes body size increase by activating p70 S6 kinase, stimulates ovary development by augmenting the titer of vitellogenin (Vg) and juvenile hormone, and reduces developmental time by increasing the activity of mitogen-activated protein kinase and inducing 20-hydroxyecdysone (ecdysterone, 20E) production. Together with apisimin forms the apisin complex that polymerizes at low pH, forming a fiber network and increasing the viscosity of royal jelly. The viscous royal Jelly placed in honeycomb cells containing larvae destined to become queens acts as both a food supply and an adhesive preventing larvae from falling out; queens are reared in special large cells oriented vertically. Produced in the spermatheca of adult queen bees, along with other major royal jelly proteins, where it may act as a nutrient supply for sperm stored by mated queens, or be involved in energy metabolism. In terms of biological role, has antibacterial activity against the Gram-positive bacteria S.aureus ATCC 6535, S.saprophyticus and B.subtilis CCT2471, and the Gram-negative bacteria E.coli CCT1371, E.cloacae ATCC 23355, K.pneumoniae ATCC 13883 and P.aeruginosa ATCC 27853, and antifungal activity against C.albicans. Lack cytolytic activity and does not induce rat peritoneal mast cell degranulation. Functionally, lacks antibacterial and antifungal activity. Lacks cytolytic activity and does not induce rat peritoneal mast cell degranulation. The protein is Major royal jelly protein 1 of Apis mellifera (Honeybee).